Reading from the N-terminus, the 362-residue chain is 3-dehydroquinate synthase (362 aa).

NAD(+)-binding positions include 71–76 (DGEQYK), 105–109 (GVVGD), 129–130 (TT), Lys-142, Lys-151, and 169–172 (CLKT). Residues Glu-184, His-247, and His-264 each coordinate Zn(2+).

It belongs to the sugar phosphate cyclases superfamily. Dehydroquinate synthase family. It depends on Co(2+) as a cofactor. Requires Zn(2+) as cofactor. NAD(+) serves as cofactor.

The protein resides in the cytoplasm. It carries out the reaction 7-phospho-2-dehydro-3-deoxy-D-arabino-heptonate = 3-dehydroquinate + phosphate. It functions in the pathway metabolic intermediate biosynthesis; chorismate biosynthesis; chorismate from D-erythrose 4-phosphate and phosphoenolpyruvate: step 2/7. In terms of biological role, catalyzes the conversion of 3-deoxy-D-arabino-heptulosonate 7-phosphate (DAHP) to dehydroquinate (DHQ). This is 3-dehydroquinate synthase from Shigella flexneri serotype 5b (strain 8401).